The following is a 200-amino-acid chain: Small ribosomal subunit protein uS4c (200 aa).

Residues 88-148 (IRLDNTIFNL…PKSYYIFKLC (61 aa)) form the S4 RNA-binding domain.

Belongs to the universal ribosomal protein uS4 family. As to quaternary structure, part of the 30S ribosomal subunit.

The protein localises to the plastid. The protein resides in the apicoplast. In terms of biological role, one of the primary rRNA binding proteins, it binds directly to 16S rRNA where it nucleates assembly of the body of the 30S subunit. The polypeptide is Small ribosomal subunit protein uS4c (rps4) (Eimeria tenella (Coccidian parasite)).